Reading from the N-terminus, the 210-residue chain is Cell division protein SepF (210 aa).

Residues 13 to 101 are disordered; the sequence is GLADGDEYDE…EPVDPGYRAP (89 aa). Composition is skewed to basic and acidic residues over residues 22 to 70 and 83 to 93; these read EQPR…ERPE and VEPRRPARPEP.

The protein belongs to the SepF family. As to quaternary structure, homodimer. Interacts with FtsZ.

It is found in the cytoplasm. Functionally, cell division protein that is part of the divisome complex and is recruited early to the Z-ring. Probably stimulates Z-ring formation, perhaps through the cross-linking of FtsZ protofilaments. Its function overlaps with FtsA. This chain is Cell division protein SepF, found in Micrococcus luteus (strain ATCC 4698 / DSM 20030 / JCM 1464 / CCM 169 / CCUG 5858 / IAM 1056 / NBRC 3333 / NCIMB 9278 / NCTC 2665 / VKM Ac-2230) (Micrococcus lysodeikticus).